The following is a 233-amino-acid chain: Octanoyltransferase (233 aa).

The BPL/LPL catalytic domain occupies 38–218 (AGGPDTLLLL…AVCDALDGVL (181 aa)). The segment covering 57 to 66 (RRTEPHERPL) has biased composition (basic and acidic residues). The tract at residues 57–77 (RRTEPHERPLDGTPVVDTDRG) is disordered. Substrate-binding positions include 76–83 (RGGKITWH), 148–150 (AIG), and 161–163 (GFA). Cys-179 functions as the Acyl-thioester intermediate in the catalytic mechanism.

The protein belongs to the LipB family.

Its subcellular location is the cytoplasm. The enzyme catalyses octanoyl-[ACP] + L-lysyl-[protein] = N(6)-octanoyl-L-lysyl-[protein] + holo-[ACP] + H(+). It functions in the pathway protein modification; protein lipoylation via endogenous pathway; protein N(6)-(lipoyl)lysine from octanoyl-[acyl-carrier-protein]: step 1/2. Catalyzes the transfer of endogenously produced octanoic acid from octanoyl-acyl-carrier-protein onto the lipoyl domains of lipoate-dependent enzymes. Lipoyl-ACP can also act as a substrate although octanoyl-ACP is likely to be the physiological substrate. This is Octanoyltransferase from Mycolicibacterium paratuberculosis (strain ATCC BAA-968 / K-10) (Mycobacterium paratuberculosis).